Reading from the N-terminus, the 298-residue chain is Cation-efflux pump FieF (298 aa).

The chain crosses the membrane as a helical span at residues 24–44 (LLIKIFAWWYTGSVSILAALV). Positions 45 and 49 each coordinate Zn(2+). The next 2 membrane-spanning stretches (helical) occupy residues 80–100 (SLAA…LTSI) and 112–132 (PGVG…LVTF). Zn(2+) contacts are provided by histidine 151 and aspartate 155. 2 helical membrane passes run 154–174 (SDVM…YGWH) and 176–196 (ADAL…LRMG).

This sequence belongs to the cation diffusion facilitator (CDF) transporter (TC 2.A.4) family. FieF subfamily. Homodimer.

It localises to the cell inner membrane. The catalysed reaction is Zn(2+)(in) + H(+)(out) = Zn(2+)(out) + H(+)(in). It carries out the reaction Cd(2+)(in) + H(+)(out) = Cd(2+)(out) + H(+)(in). The enzyme catalyses Fe(2+)(in) + H(+)(out) = Fe(2+)(out) + H(+)(in). Its function is as follows. Divalent metal cation transporter which exports Zn(2+), Cd(2+) and possibly Fe(2+). May be involved in zinc and iron detoxification by efflux. The polypeptide is Cation-efflux pump FieF (Salmonella typhi).